The primary structure comprises 179 residues: Large ribosomal subunit protein uL5 (179 aa).

Belongs to the universal ribosomal protein uL5 family. As to quaternary structure, part of the 50S ribosomal subunit; part of the 5S rRNA/L5/L18/L25 subcomplex. Contacts the 5S rRNA and the P site tRNA. Forms a bridge to the 30S subunit in the 70S ribosome.

In terms of biological role, this is one of the proteins that bind and probably mediate the attachment of the 5S RNA into the large ribosomal subunit, where it forms part of the central protuberance. In the 70S ribosome it contacts protein S13 of the 30S subunit (bridge B1b), connecting the 2 subunits; this bridge is implicated in subunit movement. Contacts the P site tRNA; the 5S rRNA and some of its associated proteins might help stabilize positioning of ribosome-bound tRNAs. In Sodalis glossinidius (strain morsitans), this protein is Large ribosomal subunit protein uL5.